Here is a 153-residue protein sequence, read N- to C-terminus: 3-hydroxyacyl-[acyl-carrier-protein] dehydratase FabZ (153 aa).

Residue H57 is part of the active site.

This sequence belongs to the thioester dehydratase family. FabZ subfamily.

The protein resides in the cytoplasm. The catalysed reaction is a (3R)-hydroxyacyl-[ACP] = a (2E)-enoyl-[ACP] + H2O. Functionally, involved in unsaturated fatty acids biosynthesis. Catalyzes the dehydration of short chain beta-hydroxyacyl-ACPs and long chain saturated and unsaturated beta-hydroxyacyl-ACPs. The chain is 3-hydroxyacyl-[acyl-carrier-protein] dehydratase FabZ from Vibrio cholerae serotype O1 (strain ATCC 39315 / El Tor Inaba N16961).